A 129-amino-acid chain; its full sequence is MARKVVRTKRRERKNIATGVAHIKSTFNNSMVTITDPKGNVISWSSAGALGFKGSRKSTPYAAQMAAETAAKAAMEHGLKEVECFVKGPGAGREAAIRALQAAGLEVNMIKDVTPIPHNGCRPPKRRRV.

The protein belongs to the universal ribosomal protein uS11 family. As to quaternary structure, part of the 30S ribosomal subunit. Interacts with proteins S7 and S18. Binds to IF-3.

Located on the platform of the 30S subunit, it bridges several disparate RNA helices of the 16S rRNA. Forms part of the Shine-Dalgarno cleft in the 70S ribosome. The chain is Small ribosomal subunit protein uS11 from Desulfitobacterium hafniense (strain DSM 10664 / DCB-2).